The sequence spans 377 residues: MAAPCLRTPGVQLLSMSSRPGRLFTPGSWSFCSSATSSRPLNAQRLAEKLRAQKQEQKAKEVRVPTNPVQRRVQELVRFTQQLQRVHPNVLAKELSRRILHQDNDLVVINKPYGLPVHGGPGVQLCISDVLPILAKMLHGHKAEPLHLCHRLDKETTGVMVLAWEKDMAHQVQELFRTRQVEKKYWAITVRVPLPSAGVVDIPIKEKEVQGPQQHHKMTLSPSYRLDNGKMVKVRASRDAHVAVTQYQVLSSASSSALVELQPVTGIKHQLRVHLSFGLDCPILGDHKYSDWTRLAPQKLSAGTLKKLGLQQSKARYIPLHLHARQLILPALGSRTEELLLTCKLPHFFARSLLRLGLDMPNQDQSRGNKARHVEAR.

The transit peptide at 1–46 (MAAPCLRTPGVQLLSMSSRPGRLFTPGSWSFCSSATSSRPLNAQRL) directs the protein to the mitochondrion. D153 is an active-site residue.

This sequence belongs to the pseudouridine synthase RluA family. In terms of assembly, interacts with 16S mt-rRNA, mt-tRNA(Phe) and mt-tRNA(Met). Forms a regulatory protein-RNA complex, consisting of RCC1L, NGRN, RPUSD3, RPUSD4, TRUB2, FASTKD2 and 16S mt-rRNA.

The protein resides in the mitochondrion matrix. The protein localises to the nucleus. It is found in the cytoplasm. The catalysed reaction is uridine in 5S rRNA = pseudouridine in 5S rRNA. The enzyme catalyses a uridine in tRNA = a pseudouridine in tRNA. It catalyses the reaction a uridine in mRNA = a pseudouridine in mRNA. Its function is as follows. Catalyzes uridine to pseudouridine isomerization (pseudouridylation) of different mitochondrial RNA substrates. Acts on position 1397 in 16S mitochondrial ribosomal RNA (16S mt-rRNA). This modification is required for the assembly of 16S mt-rRNA into a functional mitochondrial ribosome. As a component of a functional protein-RNA module, consisting of RCC1L, NGRN, RPUSD3, RPUSD4, TRUB2, FASTKD2 and 16S mt-rRNA, controls 16S mt-rRNA abundance and is required for intra-mitochondrial translation. Acts on position 39 in mitochondrial tRNA(Phe). Also catalyzes pseudouridylation of mRNAs in nucleus: acts as a regulator of pre-mRNA splicing by mediating pseudouridylation of pre-mRNAs at locations associated with alternatively spliced regions. Pseudouridylation of pre-mRNAs near splice sites directly regulates mRNA splicing and mRNA 3'-end processing. The sequence is that of Pseudouridylate synthase RPUSD4, mitochondrial from Mus musculus (Mouse).